The sequence spans 106 residues: UPF0145 protein CKL_2433 (106 aa).

It belongs to the UPF0145 family.

In Clostridium kluyveri (strain ATCC 8527 / DSM 555 / NBRC 12016 / NCIMB 10680 / K1), this protein is UPF0145 protein CKL_2433.